The sequence spans 1031 residues: MLKIIAKIFGSKHEKDIKKIQPIVDRINEIYGTLNALPDEAFRNKGVELRKKVRDKLIPFETKIKETEHKLERPDMSHEEHEKLNIELEQLRNKYEEATAAILDEVLPETFALVKETCRRLKGHTYTVMGHEMVWDMVPYDVQLIGGIVLHQGKIAEMATGEGKTLVSTLPVFLNALTGRGVHVVTVNEYLAQRDMEWMRPVYEYHGLSTGVILAGLYSNQRRNAYLCDITWGTNSEFGFDYLRDNMAGSEEEMVQRDFYFAIVDEVDSVLIDEARTPLIISGPVPNSDTDTKYREIKPWIEQLVRAQQNLVATLLDQAEKTLKEKPNDFDAGLALLRVKRGQPKNKRFIKMLSQPGIGKLVQSVENEYLKDNSSRMHEVDDELFYAVDEKANTIDLTEKGREFLGKLSHQDQDLFLLPDVGSEIAAIEADKNLQPTDKIRKKDEVYRLYSERSDSLHTIGQLLKAYTLFAKDDEYVVQNGQVMIVDEFTGRVLAGRRYSDGLHQAIEAKENVKIEGETQTMATITIQNYFRLYSKLAGMTGTAETEASEFFEIYKLDVVVIPTNHPIARHDQDDLVYKTRREKYNAIVNKVQELNAKGQPVLVGTASVEVSETLSRMLRAKRIQHNVLNAKQHAREAEIVAMAGQKGAVTIATNMAGRGTDIKLGPGVREMGGLFILGSERHESRRIDRQLRGRAGRQGDPGESIFYVSLEDDLMRLFGSDRVIAVMDKLGHEEGDVIEHSMITKSIERAQKKVEEQNFAIRKRLLEYDDVMNQQREVIYTRRRKALKMGRLKNDIMDLLQDYCYTVAKKFHESNDPAGLEEQVLRELSVEFHVEASAFEREPFEQTAEALYKAASEFYHRKENSLPDEIMQQIEKYAVLSVIDQKWREHLREIDSLREGINLRAYGQKDPLLEYKQEAYKLFVELLREIEHETLSVAFRLFPVSQDESEEIEARQRRQAVRQERLVAQHAEAESTYKIAADGGMNATLWMPGDEIVVQQPVRTEKKPGRNDDCPCGSGKKYKNCCGANE.

Residues glutamine 143, 161–165 (GEGKT), and aspartate 662 contribute to the ATP site. Cysteine 1015, cysteine 1017, cysteine 1026, and cysteine 1027 together coordinate Zn(2+).

This sequence belongs to the SecA family. In terms of assembly, monomer and homodimer. Part of the essential Sec protein translocation apparatus which comprises SecA, SecYEG and auxiliary proteins SecDF. Other proteins may also be involved. Zn(2+) is required as a cofactor.

The protein resides in the cell inner membrane. The protein localises to the cytoplasm. The enzyme catalyses ATP + H2O + cellular proteinSide 1 = ADP + phosphate + cellular proteinSide 2.. In terms of biological role, part of the Sec protein translocase complex. Interacts with the SecYEG preprotein conducting channel. Has a central role in coupling the hydrolysis of ATP to the transfer of proteins into and across the cell membrane, serving as an ATP-driven molecular motor driving the stepwise translocation of polypeptide chains across the membrane. This chain is Protein translocase subunit SecA, found in Chlorobaculum tepidum (strain ATCC 49652 / DSM 12025 / NBRC 103806 / TLS) (Chlorobium tepidum).